A 334-amino-acid chain; its full sequence is MLKASLISIASYVPEKILTNFDLEKMVDTSDEWIVKRTGIKERHIAEGEITSDLGTKAAKLAIKRAGLEKPQIDTIICATMSPDHLCMPSTACKIAANLGLDYGITAFDISAACTGFIYLLQLANSLIKSGAKKNVLIVGAEKLSSVVDYTDRSTCILFGDGAGAAIISASNENEIIDIHTASDGTQSHLLITPGCGSAYPASDETLAKRLNFIHMSGNEVFKIAVQTLTKSVIEILERNNMTSRDIDFFVPHQANIRIIEAVKQRLDFKDEQCVLTIAKYGNTSSASIPMAINDAYESGRIKNGSTLLLDAFGGGFTWGSAILKFGGKNFYQI.

Residues Cys114 and His253 contribute to the active site. Residues 254–258 (QANIR) form an ACP-binding region. Asn283 is a catalytic residue.

This sequence belongs to the thiolase-like superfamily. FabH family. Homodimer.

It localises to the cytoplasm. It catalyses the reaction malonyl-[ACP] + acetyl-CoA + H(+) = 3-oxobutanoyl-[ACP] + CO2 + CoA. It functions in the pathway lipid metabolism; fatty acid biosynthesis. In terms of biological role, catalyzes the condensation reaction of fatty acid synthesis by the addition to an acyl acceptor of two carbons from malonyl-ACP. Catalyzes the first condensation reaction which initiates fatty acid synthesis and may therefore play a role in governing the total rate of fatty acid production. Possesses both acetoacetyl-ACP synthase and acetyl transacylase activities. Its substrate specificity determines the biosynthesis of branched-chain and/or straight-chain of fatty acids. This Campylobacter curvus (strain 525.92) protein is Beta-ketoacyl-[acyl-carrier-protein] synthase III.